Consider the following 342-residue polypeptide: DDB1- and CUL4-associated factor 7 (342 aa).

WD repeat units follow at residues lysine 6–leucine 52, isoleucine 60–valine 100, glutamate 108–leucine 150, histidine 165–leucine 206, threonine 213–valine 252, threonine 257–isoleucine 296, and isoleucine 303–valine 342.

The protein belongs to the WD repeat DCAF7 family. In terms of assembly, interacts with DYRK1A, DYRK1B and DIAPH1. Interacts with DDB1. Interacts with ZNF703. Interacts with human adenovirus 5 E1A protein.

The protein resides in the cytoplasm. The protein localises to the nucleus. The protein operates within protein modification; protein ubiquitination. Its function is as follows. Involved in craniofacial development. Acts upstream of the EDN1 pathway and is required for formation of the upper jaw equivalent, the palatoquadrate. The activity required for EDN1 pathway function differs between the first and second arches. Associates with DIAPH1 and controls GLI1 transcriptional activity. Could be involved in normal and disease skin development. May function as a substrate receptor for CUL4-DDB1 E3 ubiquitin-protein ligase complex. This is DDB1- and CUL4-associated factor 7 (DCAF7) from Homo sapiens (Human).